The sequence spans 87 residues: Putative regulatory protein GTNG_1019 (87 aa).

Belongs to the RemA family.

The chain is Putative regulatory protein GTNG_1019 from Geobacillus thermodenitrificans (strain NG80-2).